We begin with the raw amino-acid sequence, 361 residues long: CRISPR system associated protein Cas8 (361 aa).

Monomer. Can form a Cascade complex with Csa5, Cas7, Cas5a, Cas3 and Cas3'.

CRISPR (clustered regularly interspaced short palindromic repeat) is an adaptive immune system that provides protection against mobile genetic elements (viruses, transposable elements and conjugative plasmids). CRISPR clusters contain sequences complementary to antecedent mobile elements and target invading nucleic acids. CRISPR clusters are transcribed and processed into CRISPR RNA (crRNA). The chain is CRISPR system associated protein Cas8 (cas8a2) from Thermoproteus tenax (strain ATCC 35583 / DSM 2078 / JCM 9277 / NBRC 100435 / Kra 1).